The sequence spans 80 residues: Trefoil factor 3 (80 aa).

A signal peptide spans 1–21 (MEARMFWLLVVLLALASSSSA). A P-type domain is found at 30–73 (NQCAVPAKDRVDCGYPQVTPEQCNNRGCCFDSSIXGVPWCFKPL). Cystine bridges form between Cys-32–Cys-58, Cys-42–Cys-57, and Cys-52–Cys-69.

Monomer. Homodimer; disulfide-linked.

Its subcellular location is the secreted. It is found in the extracellular space. It localises to the extracellular matrix. The protein localises to the cytoplasm. Functionally, involved in the maintenance and repair of the intestinal mucosa. Promotes the mobility of epithelial cells in healing processes (motogen). This is Trefoil factor 3 (TFF3) from Sus scrofa (Pig).